The chain runs to 471 residues: Retinoic acid receptor RXR-beta-A (471 aa).

Positions 1-34 (MGDSRDSRSPDSSSVSSPPSGQRSPPLAPSAAAM) are disordered. Residues 1–102 (MGDSRDSRSP…HAVSSSDDVK (102 aa)) are modulating. Residues 10-25 (PDSSSVSSPPSGQRSP) show a composition bias toward low complexity. The segment at residues 122-197 (KRLCAICGDR…MGMKREVVQD (76 aa)) is a DNA-binding region (nuclear receptor). 2 consecutive NR C4-type zinc fingers follow at residues 125–145 (CAICGDRSSGKHYGVYSCEGC) and 161–185 (CRDNKDCLVDKRQRNRCQYCRYQKC). Positions 196–216 (QDERQRSVQEERQRNKERDGE) are enriched in basic and acidic residues. A disordered region spans residues 196–226 (QDERQRSVQEERQRNKERDGEVESSSAANEE). The hinge stretch occupies residues 198–221 (ERQRSVQEERQRNKERDGEVESSS). One can recognise an NR LBD domain in the interval 224–467 (NEEMPVEKIL…TFLMEMLEAP (244 aa)).

It belongs to the nuclear hormone receptor family. NR2 subfamily. As to quaternary structure, homodimer. Heterodimer; with a rar molecule. Binds DNA preferentially as a rar/rxr heterodimer. Heterodimerizes with rarga. In terms of tissue distribution, shows uniform expression from the blastula to mid-gastrula stages. At 12 hours post-fertilization (hpf), expressed ubiquitously but more weakly. At 24 hpf, restricted to the ventral diencephalon, pharangeal endoderm and trunk and tail mesoderm; mesoderm expression is in medial cells of each somite along the dorsoventral axis, forming stripes. At 48 hpf, expressed in forebrain, eye, midbrain and anterior hindbrain.

It is found in the nucleus. Its function is as follows. Receptor for retinoic acid. Retinoic acid receptors bind as heterodimers to their target response elements in response to their ligands, all-trans or 9-cis retinoic acid, and regulate gene expression in various biological processes. The rar/rxr heterodimers bind to the retinoic acid response elements (RARE) composed of tandem 5'-AGGTCA-3' sites known as DR1-DR5. The high affinity ligand for rxrs is 9-cis retinoic acid. The sequence is that of Retinoic acid receptor RXR-beta-A (rxrba) from Danio rerio (Zebrafish).